The chain runs to 75 residues: Sec-independent protein translocase protein TatA (75 aa).

Residues 1–21 (MGISIWQLLIVLGIVILLFGT) traverse the membrane as a helical segment. Positions 41 to 75 (SMSDEEEKNAEQQPLEKQNAEQQAQAEDKPKEKQG) are disordered. Residues 56-65 (EKQNAEQQAQ) show a composition bias toward low complexity. The segment covering 66–75 (AEDKPKEKQG) has biased composition (basic and acidic residues).

This sequence belongs to the TatA/E family. In terms of assembly, the Tat system comprises two distinct complexes: a TatABC complex, containing multiple copies of TatA, TatB and TatC subunits, and a separate TatA complex, containing only TatA subunits. Substrates initially bind to the TatABC complex, which probably triggers association of the separate TatA complex to form the active translocon.

It localises to the cell inner membrane. In terms of biological role, part of the twin-arginine translocation (Tat) system that transports large folded proteins containing a characteristic twin-arginine motif in their signal peptide across membranes. TatA could form the protein-conducting channel of the Tat system. This is Sec-independent protein translocase protein TatA from Marinobacter nauticus (strain ATCC 700491 / DSM 11845 / VT8) (Marinobacter aquaeolei).